The primary structure comprises 140 residues: Translation initiation factor 2 subunit beta (140 aa).

It belongs to the eIF-2-beta/eIF-5 family. In terms of assembly, heterotrimer composed of an alpha, a beta and a gamma chain.

EIF-2 functions in the early steps of protein synthesis by forming a ternary complex with GTP and initiator tRNA. In Pyrococcus abyssi (strain GE5 / Orsay), this protein is Translation initiation factor 2 subunit beta (eif2b).